The sequence spans 568 residues: Oxygen-dependent choline dehydrogenase (568 aa).

FAD is bound at residue 8-37 (DYVIIGGGSAGSVLGNRLTEDKDKEVLVLE). The active-site Proton acceptor is the His473.

This sequence belongs to the GMC oxidoreductase family. Requires FAD as cofactor.

It catalyses the reaction choline + A = betaine aldehyde + AH2. The catalysed reaction is betaine aldehyde + NAD(+) + H2O = glycine betaine + NADH + 2 H(+). The protein operates within amine and polyamine biosynthesis; betaine biosynthesis via choline pathway; betaine aldehyde from choline (cytochrome c reductase route): step 1/1. In terms of biological role, involved in the biosynthesis of the osmoprotectant glycine betaine. Catalyzes the oxidation of choline to betaine aldehyde and betaine aldehyde to glycine betaine at the same rate. This chain is Oxygen-dependent choline dehydrogenase, found in Staphylococcus haemolyticus (strain JCSC1435).